The following is a 435-amino-acid chain: Glycine reductase complex component B subunit gamma (435 aa).

The active site involves Sec-350. A non-standard amino acid (selenocysteine) is located at residue Sec-350.

It belongs to the GrdB/GrdF/GrdH family. In terms of assembly, heterohexamer of two alpha, two beta and two gamma subunits. Component of the glycine reductase complex, together with components A and C. PB is substrate specific.

It catalyses the reaction acetyl phosphate + [thioredoxin]-disulfide + NH4(+) + H2O = [thioredoxin]-dithiol + glycine + phosphate + H(+). In the first step of glycine reductase, the substrate is bound to component PB via a Schiff base intermediate. Then the PB-activated substrate is nucleophilically attacked by the selenol anion of component PA to transform it to a carboxymethylated selenoether and the respective amine. By action of component PC, acetyl phosphate is formed, leaving component PA in its oxidized state. Finally component PA becomes reduced by the thioredoxin system to start a new catalytic cycle of reductive deamination. The sequence is that of Glycine reductase complex component B subunit gamma (grdB) from Carboxydothermus hydrogenoformans (strain ATCC BAA-161 / DSM 6008 / Z-2901).